The chain runs to 287 residues: Eukaryotic translation initiation factor 3 subunit F (287 aa).

In terms of domain architecture, MPN spans 12–142 (VRVHPVVLFQ…IKAYVCVSLG (131 aa)).

Belongs to the eIF-3 subunit F family. In terms of assembly, component of the eukaryotic translation initiation factor 3 (eIF-3) complex.

Its subcellular location is the cytoplasm. In terms of biological role, component of the eukaryotic translation initiation factor 3 (eIF-3) complex, which is involved in protein synthesis of a specialized repertoire of mRNAs and, together with other initiation factors, stimulates binding of mRNA and methionyl-tRNAi to the 40S ribosome. The eIF-3 complex specifically targets and initiates translation of a subset of mRNAs involved in cell proliferation. The protein is Eukaryotic translation initiation factor 3 subunit F of Anopheles gambiae (African malaria mosquito).